We begin with the raw amino-acid sequence, 244 residues long: Phosphoadenosine 5'-phosphosulfate reductase (244 aa).

Cys239 serves as the catalytic Nucleophile; cysteine thiosulfonate intermediate.

It belongs to the PAPS reductase family. CysH subfamily.

The protein localises to the cytoplasm. It carries out the reaction [thioredoxin]-disulfide + sulfite + adenosine 3',5'-bisphosphate + 2 H(+) = [thioredoxin]-dithiol + 3'-phosphoadenylyl sulfate. Its pathway is sulfur metabolism; hydrogen sulfide biosynthesis; sulfite from sulfate: step 3/3. Functionally, catalyzes the formation of sulfite from phosphoadenosine 5'-phosphosulfate (PAPS) using thioredoxin as an electron donor. The polypeptide is Phosphoadenosine 5'-phosphosulfate reductase (Escherichia coli O81 (strain ED1a)).